We begin with the raw amino-acid sequence, 348 residues long: Photosystem II protein D1 (348 aa).

3 helical membrane passes run Y33 to V50, H122 to F137, and W146 to A160. Chlorophyll a is bound at residue H122. W130 lines the pheophytin a pocket. [CaMn4O5] cluster-binding residues include D174 and E193. A helical membrane pass occupies residues F201–L222. H202 contributes to the chlorophyll a binding site. Residues H219 and S268–F269 each bind a quinone. H219 is a binding site for Fe cation. A Fe cation-binding site is contributed by H276. Residues F278–L292 traverse the membrane as a helical segment. Residues H336, E337, D346, and A348 each coordinate [CaMn4O5] cluster.

The protein belongs to the reaction center PufL/M/PsbA/D family. In terms of assembly, PSII is composed of 1 copy each of membrane proteins PsbA, PsbB, PsbC, PsbD, PsbE, PsbF, PsbH, PsbI, PsbJ, PsbK, PsbL, PsbM, PsbT, PsbX, PsbY, PsbZ, Psb30/Ycf12, at least 3 peripheral proteins of the oxygen-evolving complex and a large number of cofactors. It forms dimeric complexes. The D1/D2 heterodimer binds P680, chlorophylls that are the primary electron donor of PSII, and subsequent electron acceptors. It shares a non-heme iron and each subunit binds pheophytin, quinone, additional chlorophylls, carotenoids and lipids. D1 provides most of the ligands for the Mn4-Ca-O5 cluster of the oxygen-evolving complex (OEC). There is also a Cl(-1) ion associated with D1 and D2, which is required for oxygen evolution. The PSII complex binds additional chlorophylls, carotenoids and specific lipids. serves as cofactor. In terms of processing, tyr-165 forms a radical intermediate that is referred to as redox-active TyrZ, YZ or Y-Z.

The protein localises to the plastid. Its subcellular location is the chloroplast thylakoid membrane. The enzyme catalyses 2 a plastoquinone + 4 hnu + 2 H2O = 2 a plastoquinol + O2. Its function is as follows. Photosystem II (PSII) is a light-driven water:plastoquinone oxidoreductase that uses light energy to abstract electrons from H(2)O, generating O(2) and a proton gradient subsequently used for ATP formation. It consists of a core antenna complex that captures photons, and an electron transfer chain that converts photonic excitation into a charge separation. The D1/D2 (PsbA/PsbD) reaction center heterodimer binds P680, the primary electron donor of PSII as well as several subsequent electron acceptors. This chain is Photosystem II protein D1, found in Heterocapsa rotundata (Dinoflagellate).